The following is a 133-amino-acid chain: uncharacterized protein (133 aa).

One can recognise an HIT domain in the interval 3-106 (IFTKIINREL…PTRSLSDFGF (104 aa)). The Histidine triad motif motif lies at 90–94 (HLHIH).

This is an uncharacterized protein from Mycobacterium tuberculosis (strain ATCC 25618 / H37Rv).